A 315-amino-acid polypeptide reads, in one-letter code: ATP synthase gamma chain (315 aa).

Belongs to the ATPase gamma chain family. As to quaternary structure, F-type ATPases have 2 components, CF(1) - the catalytic core - and CF(0) - the membrane proton channel. CF(1) has five subunits: alpha(3), beta(3), gamma(1), delta(1), epsilon(1). CF(0) has three main subunits: a, b and c.

Its subcellular location is the cell membrane. Produces ATP from ADP in the presence of a proton gradient across the membrane. The gamma chain is believed to be important in regulating ATPase activity and the flow of protons through the CF(0) complex. In Latilactobacillus sakei subsp. sakei (strain 23K) (Lactobacillus sakei subsp. sakei), this protein is ATP synthase gamma chain.